The primary structure comprises 167 residues: Lipoprotein signal peptidase (167 aa).

4 helical membrane-spanning segments follow: residues 8–28, 46–66, 68–88, and 101–121; these read TFLTLLLLASIDWVSKLVVLL, WGHFSFLIIPSFNEGAAFGLF, QYKIPLLIFRVCVILGLALFL, and IALTLILAGALGNVGDILLHG. Catalysis depends on residues Asp-125 and Asp-143. The helical transmembrane segment at 139–159 threads the bilayer; the sequence is FNLADAFISIGTLLLIGHLYF.

Belongs to the peptidase A8 family.

It localises to the cell inner membrane. It catalyses the reaction Release of signal peptides from bacterial membrane prolipoproteins. Hydrolyzes -Xaa-Yaa-Zaa-|-(S,diacylglyceryl)Cys-, in which Xaa is hydrophobic (preferably Leu), and Yaa (Ala or Ser) and Zaa (Gly or Ala) have small, neutral side chains.. The protein operates within protein modification; lipoprotein biosynthesis (signal peptide cleavage). In terms of biological role, this protein specifically catalyzes the removal of signal peptides from prolipoproteins. This Chlamydia trachomatis serovar L2b (strain UCH-1/proctitis) protein is Lipoprotein signal peptidase.